The sequence spans 318 residues: Methionyl-tRNA formyltransferase (318 aa).

112–115 (SILP) contributes to the (6S)-5,6,7,8-tetrahydrofolate binding site.

This sequence belongs to the Fmt family.

The enzyme catalyses L-methionyl-tRNA(fMet) + (6R)-10-formyltetrahydrofolate = N-formyl-L-methionyl-tRNA(fMet) + (6S)-5,6,7,8-tetrahydrofolate + H(+). In terms of biological role, attaches a formyl group to the free amino group of methionyl-tRNA(fMet). The formyl group appears to play a dual role in the initiator identity of N-formylmethionyl-tRNA by promoting its recognition by IF2 and preventing the misappropriation of this tRNA by the elongation apparatus. This is Methionyl-tRNA formyltransferase from Shewanella baltica (strain OS195).